A 590-amino-acid polypeptide reads, in one-letter code: Leukocyte immunoglobulin-like receptor subfamily B member 5 (590 aa).

Positions 1–23 are cleaved as a signal peptide; that stretch reads MTLTLSVLICLGLSVGPRTCVQA. Topologically, residues 24–458 are extracellular; that stretch reads GTLPKPTLWA…PQSGLGRHLG (435 aa). 4 Ig-like C2-type domains span residues 27–116, 111–228, 224–313, and 337–418; these read PKPT…LELV, DPLE…SLLI, PSLL…DPLD, and GENV…LVVS. Cys49 and Cys98 are disulfide-bonded. N-linked (GlcNAc...) asparagine glycosylation occurs at Asn139. 2 disulfide bridges follow: Cys144-Cys195 and Cys244-Cys295. 2 N-linked (GlcNAc...) asparagine glycosylation sites follow: Asn279 and Asn339. Residues Cys344 and Cys395 are joined by a disulfide bond. Residues 416–433 show a composition bias toward low complexity; sequence VVSGPSGDPSLSPTGSTP. A disordered region spans residues 416–449; that stretch reads VVSGPSGDPSLSPTGSTPTPGPEDQPLTPTGLDP. The chain crosses the membrane as a helical span at residues 459-479; the sequence is VVTGVSVAFVLLLFLLLFLLL. Residues 480–590 are Cytoplasmic-facing; it reads RHRHQSKHRT…PSIYAPLAIH (111 aa). Disordered stretches follow at residues 488–514 and 529–550; these read RTSA…KRAS and KDTQ…EAPQ. Position 514 is a phosphoserine (Ser514). An ITIM motif 1 motif is present at residues 552-557; that stretch reads VTYAQL. The span at 562–578 shows a compositional bias: basic and acidic residues; sequence LRREATEPPPSQEREPP. A disordered region spans residues 562 to 590; the sequence is LRREATEPPPSQEREPPAEPSIYAPLAIH. The short motif at 582 to 587 is the ITIM motif 2 element; the sequence is SIYAPL.

As to expression, detected in a natural killer (NK) cells.

The protein localises to the membrane. Its function is as follows. May act as receptor for class I MHC antigens. In Homo sapiens (Human), this protein is Leukocyte immunoglobulin-like receptor subfamily B member 5 (LILRB5).